A 185-amino-acid chain; its full sequence is Proton-translocating ferredoxin:NAD(+) oxidoreductase complex subunit G (185 aa).

A helical membrane pass occupies residues 14 to 34 (TKNLTITCFISGIIIAAVYYI). Threonine 161 is subject to FMN phosphoryl threonine.

Belongs to the RnfG family. The complex is composed of six subunits: RnfA, RnfB, RnfC, RnfD, RnfE and RnfG. The cofactor is FMN.

The protein localises to the cell membrane. Part of a membrane-bound complex that couples electron transfer with translocation of ions across the membrane. Couples electron transfer from reduced ferredoxin to NAD(+) with translocation of H(+) out of the cell. Essential for energy conservation during autotrophic growth. Contributes to ATP synthesis during heterotrophic growth. In Clostridium ljungdahlii (strain ATCC 55383 / DSM 13528 / PETC), this protein is Proton-translocating ferredoxin:NAD(+) oxidoreductase complex subunit G.